Reading from the N-terminus, the 110-residue chain is Multidrug transporter PA4990 (110 aa).

Helical transmembrane passes span 7 to 27 (LAIA…VAGF), 31 to 51 (LPLL…VLVM), 58 to 78 (VVYA…AMFV), and 85 to 105 (PAAL…QLFS).

This sequence belongs to the drug/metabolite transporter (DMT) superfamily. Small multidrug resistance (SMR) (TC 2.A.7.1) family.

It localises to the cell membrane. Its function is as follows. Confers resistance to ethidium bromide, acriflavine and methyl viologen. This Pseudomonas aeruginosa (strain ATCC 15692 / DSM 22644 / CIP 104116 / JCM 14847 / LMG 12228 / 1C / PRS 101 / PAO1) protein is Multidrug transporter PA4990.